The primary structure comprises 127 residues: Large ribosomal subunit protein eL24 (127 aa).

The segment at 93-127 is disordered; that stretch reads KRAQKPEVKQAAAEQAKREIKEKKKAAAKKAAPKK. Basic residues predominate over residues 115-127; the sequence is KKKAAAKKAAPKK.

This sequence belongs to the eukaryotic ribosomal protein eL24 family.

The protein is Large ribosomal subunit protein eL24 (rpl24) of Dictyostelium discoideum (Social amoeba).